We begin with the raw amino-acid sequence, 341 residues long: Ketol-acid reductoisomerase (NADP(+)) (341 aa).

The 182-residue stretch at 1–182 (MTEMFYDDDA…GGTRAGVIKT (182 aa)) folds into the KARI N-terminal Rossmann domain. Residues 25-28 (YGSQ), Lys48, Ser51, Ser53, and 83-86 (DQHQ) each bind NADP(+). His108 is an active-site residue. Gly134 contributes to the NADP(+) binding site. The 146-residue stretch at 183–328 (TFTEETETDL…RELRSLFSWQ (146 aa)) folds into the KARI C-terminal knotted domain. Positions 191, 195, 227, and 231 each coordinate Mg(2+). Residue Ser252 coordinates substrate.

This sequence belongs to the ketol-acid reductoisomerase family. The cofactor is Mg(2+).

The catalysed reaction is (2R)-2,3-dihydroxy-3-methylbutanoate + NADP(+) = (2S)-2-acetolactate + NADPH + H(+). The enzyme catalyses (2R,3R)-2,3-dihydroxy-3-methylpentanoate + NADP(+) = (S)-2-ethyl-2-hydroxy-3-oxobutanoate + NADPH + H(+). The protein operates within amino-acid biosynthesis; L-isoleucine biosynthesis; L-isoleucine from 2-oxobutanoate: step 2/4. It functions in the pathway amino-acid biosynthesis; L-valine biosynthesis; L-valine from pyruvate: step 2/4. In terms of biological role, involved in the biosynthesis of branched-chain amino acids (BCAA). Catalyzes an alkyl-migration followed by a ketol-acid reduction of (S)-2-acetolactate (S2AL) to yield (R)-2,3-dihydroxy-isovalerate. In the isomerase reaction, S2AL is rearranged via a Mg-dependent methyl migration to produce 3-hydroxy-3-methyl-2-ketobutyrate (HMKB). In the reductase reaction, this 2-ketoacid undergoes a metal-dependent reduction by NADPH to yield (R)-2,3-dihydroxy-isovalerate. This chain is Ketol-acid reductoisomerase (NADP(+)), found in Pseudarthrobacter chlorophenolicus (strain ATCC 700700 / DSM 12829 / CIP 107037 / JCM 12360 / KCTC 9906 / NCIMB 13794 / A6) (Arthrobacter chlorophenolicus).